The primary structure comprises 177 residues: Large ribosomal subunit protein uL6 (177 aa).

Belongs to the universal ribosomal protein uL6 family. In terms of assembly, part of the 50S ribosomal subunit.

This protein binds to the 23S rRNA, and is important in its secondary structure. It is located near the subunit interface in the base of the L7/L12 stalk, and near the tRNA binding site of the peptidyltransferase center. The polypeptide is Large ribosomal subunit protein uL6 (Buchnera aphidicola subsp. Acyrthosiphon kondoi (Acyrthosiphon kondoi symbiotic bacterium)).